A 167-amino-acid polypeptide reads, in one-letter code: Cell number regulator 3 (167 aa).

A helical membrane pass occupies residues 67–84 (GMTSCGTSAALFALIQWL).

This sequence belongs to the cornifelin family. In terms of tissue distribution, expressed only in pollen.

It localises to the membrane. The polypeptide is Cell number regulator 3 (CNR3) (Zea mays (Maize)).